The sequence spans 204 residues: High frequency lysogenization protein HflD homolog (204 aa).

It belongs to the HflD family.

It localises to the cytoplasm. It is found in the cell inner membrane. The protein is High frequency lysogenization protein HflD homolog of Xanthomonas euvesicatoria pv. vesicatoria (strain 85-10) (Xanthomonas campestris pv. vesicatoria).